The following is a 424-amino-acid chain: Putative chloroquine resistance transporter (424 aa).

Topologically, residues 1–56 are cytoplasmic; sequence MTVIKKGKNKKKNLKNDDRYKELDSLITNGSEIGDNSGRSCIKRFFKIIGNEMKNN. Residues 57 to 77 traverse the membrane as a helical segment; sequence VYVYFLSILYLCVCVMNKVFA. Topologically, residues 78-88 are vacuolar; it reads KRTLNKMGNYS. N-linked (GlcNAc...) asparagine glycosylation occurs at asparagine 86. A helical membrane pass occupies residues 89–109; that stretch reads FVTSETHNIICIVVFQLLYFI. Over 110–125 the chain is Cytoplasmic; the sequence is YRKTSTSGYKNESQKN. Residues 126-146 traverse the membrane as a helical segment; the sequence is FGWQFFLISLLDASTVIISMI. Topologically, residues 147-156 are vacuolar; sequence GLTRTTGNIQ. The helical transmembrane segment at 157-177 threads the bilayer; the sequence is SFIMQLIIPVNMYFCFMFLGY. The Cytoplasmic portion of the chain corresponds to 178–180; sequence RYH. The chain crosses the membrane as a helical span at residues 181–201; it reads LFNYLGAFIILITIAVVETFL. Residues 202–209 are Vacuolar-facing; it reads SFETQSEN. Residues 210–230 traverse the membrane as a helical segment; that stretch reads SIIFNLIMISALIPLSFSNMT. Residues 231 to 248 lie on the Cytoplasmic side of the membrane; it reads REVVFKKHKINILRLNAM. Residues 249 to 269 form a helical membrane-spanning segment; that stretch reads VVLFQFFTSLLVLPVYNIPFL. The Vacuolar segment spans residues 270 to 317; the sequence is KEIYMPFSEMSTNINNGLRCLFYGQNTVVENCGVGMVKMCDNCEGAWK. 2 cysteine pairs are disulfide-bonded: cysteine 289-cysteine 312 and cysteine 301-cysteine 309. A helical membrane pass occupies residues 318–338; it reads TFITFSFFNICDNLLACYIID. Residues 339-346 lie on the Cytoplasmic side of the membrane; the sequence is KFSTMTYT. The chain crosses the membrane as a helical span at residues 347–367; the sequence is IVSCIQGPAITIAYYFKFLAG. Residues 368 to 377 lie on the Vacuolar side of the membrane; it reads DAVRKPRILD. Residues 378-398 traverse the membrane as a helical segment; sequence FLTLFGYLFGTIIYRIGNIIL. Residues 399-424 are Cytoplasmic-facing; sequence EKKKMVKSQNSNDSEAELTCIETSTA.

Belongs to the CRT-like transporter family.

The protein resides in the vacuole membrane. Nutrient transporter. Involved in maintaining the osmotic homeostasis of the digestive vacuole. This chain is Putative chloroquine resistance transporter, found in Plasmodium yoelii yoelii.